A 71-amino-acid chain; its full sequence is Small ribosomal subunit protein bS21 (71 aa).

The protein belongs to the bacterial ribosomal protein bS21 family.

In Shewanella piezotolerans (strain WP3 / JCM 13877), this protein is Small ribosomal subunit protein bS21.